The primary structure comprises 145 residues: Hemoglobin subunit beta (145 aa).

The Globin domain maps to 1-145 (MLTAEEKAAV…VANALAHRYH (145 aa)). At Thr11 the chain carries Phosphothreonine. Ser43 is modified (phosphoserine). Position 58 is an N6-acetyllysine (Lys58). His62 lines the heme b pocket. An N6-acetyllysine modification is found at Lys81. His91 provides a ligand contact to heme b. S-nitrosocysteine is present on Cys92.

It belongs to the globin family. Heterotetramer of two alpha chains and two beta chains. Red blood cells.

In terms of biological role, involved in oxygen transport from the lung to the various peripheral tissues. The polypeptide is Hemoglobin subunit beta (HBB) (Bos mutus grunniens (Wild yak)).